A 386-amino-acid polypeptide reads, in one-letter code: Homoserine O-succinyltransferase (386 aa).

Positions 49-358 (NAILICHALS…DAEQGHDSFL (310 aa)) constitute an AB hydrolase-1 domain. S156 functions as the Nucleophile in the catalytic mechanism. R226 lines the substrate pocket. Active-site residues include D321 and H354. D355 serves as a coordination point for substrate.

The protein belongs to the AB hydrolase superfamily. MetX family. In terms of assembly, homodimer.

It localises to the cytoplasm. It carries out the reaction L-homoserine + succinyl-CoA = O-succinyl-L-homoserine + CoA. It functions in the pathway amino-acid biosynthesis; L-methionine biosynthesis via de novo pathway; O-succinyl-L-homoserine from L-homoserine: step 1/1. Its function is as follows. Transfers a succinyl group from succinyl-CoA to L-homoserine, forming succinyl-L-homoserine. The chain is Homoserine O-succinyltransferase from Acinetobacter baumannii (strain ACICU).